Here is a 137-residue protein sequence, read N- to C-terminus: Peptide methionine sulfoxide reductase MsrB (137 aa).

The region spanning 7–129 (AEELKKKLSE…NSASLAFSDE (123 aa)) is the MsrB domain. C46, C49, C95, and C98 together coordinate Zn(2+). Residue C118 is the Nucleophile of the active site.

Belongs to the MsrB Met sulfoxide reductase family. Zn(2+) is required as a cofactor.

The enzyme catalyses L-methionyl-[protein] + [thioredoxin]-disulfide + H2O = L-methionyl-(R)-S-oxide-[protein] + [thioredoxin]-dithiol. This chain is Peptide methionine sulfoxide reductase MsrB, found in Salmonella agona (strain SL483).